Consider the following 132-residue polypeptide: D-ribose pyranase (132 aa).

Residue histidine 20 is the Proton donor of the active site. Substrate contacts are provided by residues aspartate 28, histidine 99, and tyrosine 121–asparagine 123.

This sequence belongs to the RbsD / FucU family. RbsD subfamily. As to quaternary structure, homodecamer.

It is found in the cytoplasm. It carries out the reaction beta-D-ribopyranose = beta-D-ribofuranose. The protein operates within carbohydrate metabolism; D-ribose degradation; D-ribose 5-phosphate from beta-D-ribopyranose: step 1/2. Functionally, catalyzes the interconversion of beta-pyran and beta-furan forms of D-ribose. In Streptococcus agalactiae serotype V (strain ATCC BAA-611 / 2603 V/R), this protein is D-ribose pyranase.